The following is a 278-amino-acid chain: Dermonecrotic toxin LlSicTox-alphaIII3iii (278 aa).

Histidine 5 is an active-site residue. 2 residues coordinate Mg(2+): glutamate 25 and aspartate 27. Histidine 40 (nucleophile) is an active-site residue. A disulfide bridge connects residues cysteine 44 and cysteine 50. Aspartate 84 is a Mg(2+) binding site.

This sequence belongs to the arthropod phospholipase D family. Class I subfamily. Requires Mg(2+) as cofactor. Expressed by the venom gland.

Its subcellular location is the secreted. It carries out the reaction an N-(acyl)-sphingosylphosphocholine = an N-(acyl)-sphingosyl-1,3-cyclic phosphate + choline. It catalyses the reaction an N-(acyl)-sphingosylphosphoethanolamine = an N-(acyl)-sphingosyl-1,3-cyclic phosphate + ethanolamine. The enzyme catalyses a 1-acyl-sn-glycero-3-phosphocholine = a 1-acyl-sn-glycero-2,3-cyclic phosphate + choline. The catalysed reaction is a 1-acyl-sn-glycero-3-phosphoethanolamine = a 1-acyl-sn-glycero-2,3-cyclic phosphate + ethanolamine. Dermonecrotic toxins cleave the phosphodiester linkage between the phosphate and headgroup of certain phospholipids (sphingolipid and lysolipid substrates), forming an alcohol (often choline) and a cyclic phosphate. This toxin acts on sphingomyelin (SM). It may also act on ceramide phosphoethanolamine (CPE), lysophosphatidylcholine (LPC) and lysophosphatidylethanolamine (LPE), but not on lysophosphatidylserine (LPS), and lysophosphatidylglycerol (LPG). It acts by transphosphatidylation, releasing exclusively cyclic phosphate products as second products. Induces dermonecrosis, hemolysis, increased vascular permeability, edema, inflammatory response, and platelet aggregation. The sequence is that of Dermonecrotic toxin LlSicTox-alphaIII3iii from Loxosceles laeta (South American recluse spider).